Reading from the N-terminus, the 355-residue chain is Syntaxin-5 (355 aa).

The Cytoplasmic portion of the chain corresponds to 1–333 (MIPRKRYGSK…KYFQSVTSNR (333 aa)). Residues 28-37 (PATAGSSSSD) show a composition bias toward polar residues. Positions 28–47 (PATAGSSSSDIAPLPPPVAL) are disordered. The short motif at 245–247 (IDM) is the IxM motif; signal for cargo packaging into COPII-coated vesicles element. The t-SNARE coiled-coil homology domain maps to 263–325 (DSYIQSRADT…EAAHSEILKY (63 aa)). Positions 287-318 (FQQLAHMVKEQEETIQRIDENVLGAQLDVEAA) form a coiled coil. Residues 334–354 (WLMVKIFLILIVFFIIFVVFL) traverse the membrane as a helical; Anchor for type IV membrane protein segment. Residue A355 is a topological domain, vesicular.

This sequence belongs to the syntaxin family. Part of a ternary complex containing STX5A, NSFL1C and VCP. Part of a unique SNARE complex composed of the Golgi SNAREs GOSR1, GOSR2 and YKT6. This complex also includes VTI1A. Component of a SNARE complex consisting of STX5, YKT6, GOSR1 and BET1L. Interacts with BET1L. Interacts with BET1. Interacts with COG4. Interacts with GM130/GOLGA2. Interacts (via IxM motif) with SEC24C and SEC24D; mediates STX5 packaging into COPII-coated vesicles. Interacts with VLDLR; this interaction mediates VLDLR translocation from the endoplasmic reticulum to the plasma membrane.

The protein localises to the endoplasmic reticulum-Golgi intermediate compartment membrane. It localises to the golgi apparatus membrane. Functionally, mediates endoplasmic reticulum to Golgi transport. Together with p115/USO1 and GM130/GOLGA2, involved in vesicle tethering and fusion at the cis-Golgi membrane to maintain the stacked and inter-connected structure of the Golgi apparatus. The polypeptide is Syntaxin-5 (STX5) (Bos taurus (Bovine)).